Consider the following 210-residue polypeptide: Meiotic coiled-coil protein 7 (210 aa).

Positions lysine 77–histidine 148 form a coiled coil.

It belongs to the MND1 family. As to quaternary structure, interacts with meu13.

The protein localises to the cytoplasm. The protein resides in the nucleus. Functionally, required for meiotic recombination. This chain is Meiotic coiled-coil protein 7 (mcp7), found in Schizosaccharomyces pombe (strain 972 / ATCC 24843) (Fission yeast).